We begin with the raw amino-acid sequence, 1685 residues long: Collagen alpha-5(IV) chain (1685 aa).

An N-terminal signal peptide occupies residues 1–26 (MKLRGVSLAAGLFLLALSLWGQPAEA). Positions 27–41 (AACYGCSPGSKCDCS) are nonhelical region (NC2). A triple-helical region region spans residues 42 to 1456 (GIKGEKGERG…QGPPGPPGTS (1415 aa)). Positions 49 to 1459 (ERGFPGLEGH…PGPPGTSSVA (1411 aa)) are disordered. Low complexity predominate over residues 52 to 61 (FPGLEGHPGL). The segment covering 62-73 (PGFPGPEGPPGP) has biased composition (pro residues). N-linked (GlcNAc...) asparagine glycosylation is present at asparagine 125. The segment covering 188 to 212 (TGIPGPIGPPGPPGLMGPPGPPGLP) has biased composition (pro residues). The segment covering 214 to 225 (PKGNMGLNFQGP) has biased composition (low complexity). The span at 246 to 257 (EQKRPIDVEFQK) shows a compositional bias: basic and acidic residues. A compositionally biased stretch (pro residues) spans 266–281 (RGPPGPPGIRGPPGPP). Basic and acidic residues-rich tracts occupy residues 284–305 (EKGEKGEQGEPGKRGKPGKDGE) and 324–333 (PGRDGEKGQK). The segment covering 413–430 (PPGISIPGPPGLDGQPGA) has biased composition (low complexity). Pro residues-rich tracts occupy residues 431-445 (PGLPGPPGPAGPHIP), 493-505 (PGQPGLPGLPGPP), 620-630 (MGPPGFGPPGP), and 709-727 (PGPPGPKGFPGIPGPPGAP). The span at 788-797 (RTGLDGLPGP) shows a compositional bias: low complexity. Pro residues-rich tracts occupy residues 848–859 (PGPPGLDVPGPP) and 868–880 (PGAPGPIGPPGSP). Low complexity-rich tracts occupy residues 882-901 (LPGKAGASGFPGTKGEMGMM), 912-931 (IPGRSGVPGLKGDDGLQGQP), 983-999 (YQGLPGDPGQPGLSGQP), 1010-1026 (NPGLPGQPGLIGPPGLK), and 1111-1120 (TPGAKGQPGL). A compositionally biased stretch (pro residues) spans 1139–1148 (PGNPGLPGEP). Composition is skewed to gly residues over residues 1149–1158 (GPVGGGGHPG) and 1202–1211 (GQKGDGGLPG). 2 stretches are compositionally biased toward pro residues: residues 1234 to 1243 (QGPPGPPGSP) and 1256 to 1274 (PQGPPGRPGLPGPEGPPGL). Over residues 1295–1308 (LPGLKGDQGPPGLQ) the composition is skewed to low complexity. Residues 1353 to 1362 (IGPPGPPGLP) are compositionally biased toward pro residues. The Collagen IV NC1 domain occupies 1461-1685 (GFLITRHSQT…SRCQVCMKRT (225 aa)). Disulfide bonds link cysteine 1476-cysteine 1567, cysteine 1509-cysteine 1564, cysteine 1521-cysteine 1527, cysteine 1586-cysteine 1681, cysteine 1620-cysteine 1678, and cysteine 1632-cysteine 1638. An S-Lysyl-methionine sulfilimine (Met-Lys) (interchain with K-1667) cross-link involves residue methionine 1549. Lysine 1667 is covalently cross-linked (S-Lysyl-methionine sulfilimine (Lys-Met) (interchain with M-1549)).

The protein belongs to the type IV collagen family. As to quaternary structure, there are six type IV collagen isoforms, alpha 1(IV)-alpha 6(IV), each of which can form a triple helix structure with 2 other chains to generate type IV collagen network. Prolines at the third position of the tripeptide repeating unit (G-X-Y) are hydroxylated in some or all of the chains. Post-translationally, type IV collagens contain numerous cysteine residues which are involved in inter- and intramolecular disulfide bonding. 12 of these, located in the NC1 domain, are conserved in all known type IV collagens. In terms of processing, the trimeric structure of the NC1 domains is stabilized by covalent bonds between Lys and Met residues. As to expression, isoform 2 is found in kidney.

The protein localises to the secreted. It localises to the extracellular space. It is found in the extracellular matrix. Its subcellular location is the basement membrane. Its function is as follows. Type IV collagen is the major structural component of glomerular basement membranes (GBM), forming a 'chicken-wire' meshwork together with laminins, proteoglycans and entactin/nidogen. This chain is Collagen alpha-5(IV) chain (COL4A5), found in Homo sapiens (Human).